The primary structure comprises 414 residues: Multidrug resistance protein MdtG (414 aa).

10 consecutive transmembrane segments (helical) span residues 14–34 (LFVT…IMPF), 56–76 (LVFS…GSLA), 89–109 (ALGM…WQFL), 113–133 (ALLG…ATQV), 144–164 (TLST…GLLA), 171–191 (PVFF…WFYV), 219–239 (ILSL…IAPI), 254–274 (LAFV…ISAP), 288–308 (ILIA…FVQT), and 376–396 (AVFC…YWCL).

Belongs to the major facilitator superfamily. DHA1 family. MdtG (TC 2.A.1.2.20) subfamily.

Its subcellular location is the cell inner membrane. The polypeptide is Multidrug resistance protein MdtG (Yersinia enterocolitica serotype O:8 / biotype 1B (strain NCTC 13174 / 8081)).